We begin with the raw amino-acid sequence, 333 residues long: MNTDVIIIGAGPVGIFTAFQAGMLGMRAHVIDSLLSIGGQCTALYPEKFIYDIPGYKQITAAALISNLAEQAERFNPTYHTDQFATHMDRLDTSFVVKTSKEIEITAKAVIIAAGAGAFDYNRIPIESSHVYEGKSLFYSVKDPSIFTSKVVVIAGGGDSAADWGLILSKLARKVYLIHRRSKFRCSDSTFKDLKSLEETKKLKILTPYQITGLRGSGGQISHIELGGLTGESVTLEADYLLAFFGLKPSLRHLEEWGIEITHNCINVDPLTCSTNIKGVYAVGDVAHYDSKLKLILSGFSEAATACHHIRETIIGGDVYNFRYSTNMNEVFR.

Residues aspartate 32, glutamine 40, tyrosine 45, alanine 85, phenylalanine 119, aspartate 285, and threonine 326 each contribute to the FAD site.

It belongs to the ferredoxin--NADP reductase type 2 family. Homodimer. It depends on FAD as a cofactor.

It carries out the reaction 2 reduced [2Fe-2S]-[ferredoxin] + NADP(+) + H(+) = 2 oxidized [2Fe-2S]-[ferredoxin] + NADPH. The protein is Ferredoxin--NADP reductase of Neorickettsia sennetsu (strain ATCC VR-367 / Miyayama) (Ehrlichia sennetsu).